The following is a 141-amino-acid chain: Hemoglobin subunit alpha (141 aa).

The 141-residue stretch at 1–141 (VLSPADKSNV…VSTVLVSKYR (141 aa)) folds into the Globin domain. Ser3 is subject to Phosphoserine. Residues Lys7 and Lys11 each carry the N6-succinyllysine modification. Lys16 carries the N6-acetyllysine; alternate modification. Lys16 carries the post-translational modification N6-succinyllysine; alternate. Phosphotyrosine is present on Tyr24. A Phosphoserine modification is found at Ser35. Lys40 is modified (N6-succinyllysine). Ser49 is subject to Phosphoserine. His58 is a binding site for O2. His87 lines the heme b pocket. Ser102 is modified (phosphoserine). Thr108 is modified (phosphothreonine). Ser124 carries the phosphoserine modification. A Phosphothreonine modification is found at Thr134. Ser138 carries the phosphoserine modification.

The protein belongs to the globin family. Heterotetramer of two alpha chains and two beta chains. In terms of tissue distribution, red blood cells.

Involved in oxygen transport from the lung to the various peripheral tissues. Its function is as follows. Hemopressin acts as an antagonist peptide of the cannabinoid receptor CNR1. Hemopressin-binding efficiently blocks cannabinoid receptor CNR1 and subsequent signaling. The sequence is that of Hemoglobin subunit alpha (HBA) from Chalinolobus morio (Chocolate-wattled bat).